The chain runs to 365 residues: tRNA/tmRNA (uracil-C(5))-methyltransferase (365 aa).

S-adenosyl-L-methionine-binding residues include Gln-189, Tyr-217, Asn-222, Glu-238, and Asp-298. The active-site Nucleophile is the Cys-323. Glu-357 acts as the Proton acceptor in catalysis.

The protein belongs to the class I-like SAM-binding methyltransferase superfamily. RNA M5U methyltransferase family. TrmA subfamily.

It catalyses the reaction uridine(54) in tRNA + S-adenosyl-L-methionine = 5-methyluridine(54) in tRNA + S-adenosyl-L-homocysteine + H(+). It carries out the reaction uridine(341) in tmRNA + S-adenosyl-L-methionine = 5-methyluridine(341) in tmRNA + S-adenosyl-L-homocysteine + H(+). Dual-specificity methyltransferase that catalyzes the formation of 5-methyluridine at position 54 (m5U54) in all tRNAs, and that of position 341 (m5U341) in tmRNA (transfer-mRNA). The chain is tRNA/tmRNA (uracil-C(5))-methyltransferase from Shewanella piezotolerans (strain WP3 / JCM 13877).